Reading from the N-terminus, the 541-residue chain is Phenazine N-monooxygenase PhzNO1 (541 aa).

FAD is bound by residues Asp-39, 47 to 50 (TWYW), 59 to 60 (DT), Tyr-65, and Ile-112. 57–59 (RAD) serves as a coordination point for NADP(+). Residues 186 to 192 (TGSTGVQ), 209 to 210 (RS), and Trp-492 each bind NADP(+).

It belongs to the FAD-binding monooxygenase family. It depends on FAD as a cofactor.

It catalyses the reaction 1,6-dihydroxyphenazine + NADPH + O2 = 1,6-dihydroxyphenazine N(5)-oxide + NADP(+) + H2O. The enzyme catalyses 1,6-dihydroxyphenazine N(5)-oxide + NADPH + O2 = 1,6-dihydroxyphenazine N(5),N(10)-dioxide + NADP(+) + H2O. The catalysed reaction is 1-hydroxy-6-methoxyphenazine + NADPH + O2 = 1-hydroxy-6-methoxyphenazine N(10)-oxide + NADP(+) + H2O. It carries out the reaction quinolin-8-ol + NADPH + O2 = 8-hydroxyquinoline N-oxide + NADP(+) + H2O. Its function is as follows. Involved in the biosynthesis of phenazine natural products including myxin, an N(5),N(10)-dioxide phenazine antiobiotic, which has antimicrobial activity. Catalyzes the aromatic N-oxidations of phenazines, such as 1,6-dihydroxyphenazine (DHP), 1,6-dihydroxyphenazine N(5)-oxide (DHPO) and 1-hydroxy-6-methoxyphenazine to produce DHPO, iodinin (1,6-dihydroxyphenazine N(5),N(10)-dioxide) and 1-hydroxy-6-methoxyphenazine N(10)-oxide, respectively. Also catalyzes the N-oxidation of 8-hydroxyquinoline, but not 6-hydroxyquinoline (6-HQ), quinoline, quinoxaline, quinine and 2-phenylpyridine. This is Phenazine N-monooxygenase PhzNO1 from Lysobacter antibioticus.